The following is a 530-amino-acid chain: Cation transporter HKT2;1 (530 aa).

The Cytoplasmic portion of the chain corresponds to 1 to 40 (MTSIYHDFIHNKLQSFGRIGRYFVNFVVLAHRFIALHIHP). Transmembrane regions (helical) follow at residues 41-61 (FWIQLSYFLLISILGSVLLMF) and 102-122 (IVVITLLMLLGGEVFVSFLGL). Residues 123 to 186 (MLRLNHKHNP…DLKRSKRLRW (64 aa)) are Cytoplasmic-facing. 2 helical membrane-spanning segments follow: residues 187 to 207 (FLGFVVFSYFVVIHVAGFLLV) and 260 to 280 (GLLLLFIGQILAGNTLYPLFL). Residues 281–317 (RLLIWFLGKVTKLRELKLMIKNPEELQYDYLLPKLPT) lie on the Cytoplasmic side of the membrane. Transmembrane regions (helical) follow at residues 318–338 (AFLASTVIGLMASLVTLFGAV) and 372–392 (IDCSLIAPAVLVLFIILMYLP). The Cytoplasmic segment spans residues 393–418 (PSTTFALSNGDEKTANKKAKRKLGLV). 2 helical membrane passes run 419 to 439 (VQNLAFSQLACISVFVIVAFI) and 494 to 514 (SLSGWWSDEGKLLLVFVMLYG). Over 515–530 (RLKAFTKGTGEYWRLW) the chain is Cytoplasmic.

This sequence belongs to the TrkH potassium transport family. HKT (TC 2.A.38.3) subfamily. In terms of tissue distribution, expressed in epidermis and vascular tissue of endodermis in roots, and in cells surrounding the vasculature in leaves.

It is found in the membrane. The enzyme catalyses Na(+)(in) = Na(+)(out). In terms of biological role, seems to be involved in regulation of potassium-sodium homeostasis. Seems to act as a high-affinity sodium transporter, which mediates increased sodium uptake in roots under potassium deficiency and contributes to sodium accumulation and salt toxicity. Involved in nutritional sodium uptake and distribution in potassium-starved roots to allow plant growth. May also act as a potassium transporter. Functions as a sodium-potassium cotransporter. The protein is Cation transporter HKT2;1 of Oryza sativa subsp. indica (Rice).